Consider the following 316-residue polypeptide: Olfactory receptor 10H4 (316 aa).

The Extracellular segment spans residues 1–26 (MPSQNYSIISEFNLFGFSAFPQHLLP). N-linked (GlcNAc...) asparagine glycosylation is present at Asn5. Residues 27-47 (ILFLLYLLMFLFTLLGNLLIM) traverse the membrane as a helical segment. At 48–55 (ATIWIEHR) the chain is on the cytoplasmic side. Residues 56–76 (LHTPMYLFLCTLSVSEILFTV) form a helical membrane-spanning segment. Residues 77–100 (AITPRMLADLLSTHHSITFVACAN) lie on the Extracellular side of the membrane. Cys98 and Cys190 are oxidised to a cystine. The chain crosses the membrane as a helical span at residues 101–121 (QMFFSFMFGFTHSFLLLVMGY). Topologically, residues 122 to 140 (DRYVAICHPLRYNVLMSPR) are cytoplasmic. The chain crosses the membrane as a helical span at residues 141-161 (DCAHLVACTWAGGSVMGMMVT). Over 162-198 (TIVFHLTFCGSNVIHHFFCHVLSLLKLACENKTSSVI) the chain is Extracellular. Residues 199–219 (MGVMLVCVTALIGCLFLIILS) form a helical membrane-spanning segment. At 220-239 (YVFIVAAILRIPSAEGRHKT) the chain is on the cytoplasmic side. The helical transmembrane segment at 240-260 (FSTCVSHLTVVVTHYSFASFI) threads the bilayer. The Extracellular segment spans residues 261–273 (YLKPKGLHSMYSD). The chain crosses the membrane as a helical span at residues 274 to 294 (ALMATTYTVFTPFLSPIIFSL). Over 295-316 (RNKELKNAINKNFYRKFCPPSS) the chain is Cytoplasmic.

Belongs to the G-protein coupled receptor 1 family.

Its subcellular location is the cell membrane. Functionally, odorant receptor. The chain is Olfactory receptor 10H4 (OR10H4) from Homo sapiens (Human).